The sequence spans 250 residues: MPNDNRLAPAALAAQAAALPAAWRHVLEQPAVARAFASVLGHVEQRLAEGAVVYPATPFRALDQLAPADVRVVILGQDPYHGPGQAQGLAFSVPDDCKCPPSLRNIFNEIAVDYPRPTRHDLSAWTRQGVLLLNTSLTVEDGQPGSHAKRGWETVTDALIAEVARDPSPKVFLLWGAHAQAKQALVPADAGHLVLAANHPSPLSARRPPVPFVGCGHFRQTNAWLQQRGQKPVDWSGEQNNASRQGKFAL.

Asp78 serves as the catalytic Proton acceptor. The tract at residues 228-250 is disordered; sequence RGQKPVDWSGEQNNASRQGKFAL.

The protein belongs to the uracil-DNA glycosylase (UDG) superfamily. UNG family.

It localises to the cytoplasm. The enzyme catalyses Hydrolyzes single-stranded DNA or mismatched double-stranded DNA and polynucleotides, releasing free uracil.. Functionally, excises uracil residues from the DNA which can arise as a result of misincorporation of dUMP residues by DNA polymerase or due to deamination of cytosine. This chain is Uracil-DNA glycosylase, found in Bordetella bronchiseptica (strain ATCC BAA-588 / NCTC 13252 / RB50) (Alcaligenes bronchisepticus).